The following is a 192-amino-acid chain: Casparian strip membrane protein 1 (192 aa).

At 1 to 26 (MTKSVRLEEGDASKVLVPVGSNKGVS) the chain is on the cytoplasmic side. Residues 27 to 47 (VMDLVLRLVGIAGTLGAAIAM) traverse the membrane as a helical segment. The Extracellular portion of the chain corresponds to 48-75 (GTNEQTLPFFTRFVVFNAEYDDFRSFRL). The chain crosses the membrane as a helical span at residues 76–96 (FVIVNAIVCAYFVLTLPLSIV). Topologically, residues 97–107 (HIMRSAARGSR) are cytoplasmic. A helical transmembrane segment spans residues 108–128 (ILLIIMDTVMLALLTAGASAA). Topologically, residues 129 to 161 (ASIVYLAHNGNTSTNWLPVCQQYGDFCQGASGS) are extracellular. N-linked (GlcNAc...) asparagine glycosylation occurs at asparagine 139. Residues 162 to 182 (LIGSFGAVVVFILIILLGAIA) form a helical membrane-spanning segment. Over 183–192 (LSRHAKRVVL) the chain is Cytoplasmic.

This sequence belongs to the Casparian strip membrane proteins (CASP) family. In terms of assembly, homodimer and heterodimers.

It is found in the cell membrane. Regulates membrane-cell wall junctions and localized cell wall deposition. Required for establishment of the Casparian strip membrane domain (CSD) and the subsequent formation of Casparian strips, a cell wall modification of the root endodermis that determines an apoplastic barrier between the intraorganismal apoplasm and the extraorganismal apoplasm and prevents lateral diffusion. The protein is Casparian strip membrane protein 1 of Lactuca saligna (Willowleaf lettuce).